Consider the following 349-residue polypeptide: Flap endonuclease 1 (349 aa).

The N-domain stretch occupies residues 1-98 (MDLADLVKDV…EELERRRKAK (98 aa)). Aspartate 27, aspartate 80, glutamate 152, glutamate 154, aspartate 173, aspartate 175, and aspartate 236 together coordinate Mg(2+). An I-domain region spans residues 116–258 (ELRKYSQAIL…RALKIIKKYG (143 aa)). The interaction with PCNA stretch occupies residues 341 to 349 (RQTGLDRWF).

The protein belongs to the XPG/RAD2 endonuclease family. FEN1 subfamily. Interacts with PCNA via subunit PCNA1. Requires Mg(2+) as cofactor.

Heterotrimeric PCNA stimulates the nuclease activity without altering cleavage specificity. In terms of biological role, structure-specific nuclease with 5'-flap endonuclease and 5'-3' exonuclease activities involved in DNA replication and repair. During DNA replication, cleaves the 5'-overhanging flap structure that is generated by displacement synthesis when DNA polymerase encounters the 5'-end of a downstream Okazaki fragment. Binds the unpaired 3'-DNA end and kinks the DNA to facilitate 5' cleavage specificity. Cleaves one nucleotide into the double-stranded DNA from the junction in flap DNA, leaving a nick for ligation. Also involved in the base excision repair (BER) pathway. Acts as a genome stabilization factor that prevents flaps from equilibrating into structures that lead to duplications and deletions. Also possesses 5'-3' exonuclease activity on nicked or gapped double-stranded DNA. DNA polymerase I, DNA ligase and the flap endonuclease may be constitutively associated with the PCNA heterotrimer forming a scanning complex able to couple DNA synthesis and Okazaki fragment maturation. This chain is Flap endonuclease 1, found in Saccharolobus solfataricus (strain ATCC 35092 / DSM 1617 / JCM 11322 / P2) (Sulfolobus solfataricus).